The following is a 515-amino-acid chain: Galactose/methyl galactoside import ATP-binding protein MglA (515 aa).

ABC transporter domains are found at residues Leu8–Glu243 and Ile254–Leu499. Gly40 to Ser47 contacts ATP.

This sequence belongs to the ABC transporter superfamily. Galactose/methyl galactoside importer (TC 3.A.1.2.3) family. The complex is composed of one ATP-binding protein (MglA), two transmembrane proteins (MglC) and a solute-binding protein (MglB).

The protein resides in the cell membrane. It catalyses the reaction D-galactose(out) + ATP + H2O = D-galactose(in) + ADP + phosphate + H(+). It carries out the reaction methyl beta-D-galactoside(out) + ATP + H2O = methyl beta-D-galactoside(in) + ADP + phosphate + H(+). Functionally, part of the ABC transporter complex MglABC involved in galactose/methyl galactoside import. Responsible for energy coupling to the transport system. This is Galactose/methyl galactoside import ATP-binding protein MglA from Clostridium perfringens (strain SM101 / Type A).